The chain runs to 162 residues: Ribose-5-phosphate isomerase B (162 aa).

D-ribulose 5-phosphate is bound by residues 11 to 12 and 70 to 74; these read DH and GSGNG. E75 functions as the Proton acceptor in the catalytic mechanism. The active-site Proton donor is the H102. D-ribulose 5-phosphate-binding residues include N103, R113, R137, and R141.

It belongs to the LacAB/RpiB family. In terms of assembly, homodimer.

The enzyme catalyses aldehydo-D-ribose 5-phosphate = D-ribulose 5-phosphate. The protein operates within carbohydrate degradation; pentose phosphate pathway; D-ribose 5-phosphate from D-ribulose 5-phosphate (non-oxidative stage): step 1/1. Its function is as follows. Catalyzes the interconversion of ribulose-5-P and ribose-5-P. This Mycobacterium bovis (strain ATCC BAA-935 / AF2122/97) protein is Ribose-5-phosphate isomerase B.